We begin with the raw amino-acid sequence, 91 residues long: UPF0358 protein SERP0701 (91 aa).

The protein belongs to the UPF0358 family.

The protein is UPF0358 protein SERP0701 of Staphylococcus epidermidis (strain ATCC 35984 / DSM 28319 / BCRC 17069 / CCUG 31568 / BM 3577 / RP62A).